We begin with the raw amino-acid sequence, 488 residues long: Acetyl-CoA decarbonylase/synthase complex subunit gamma (488 aa).

One can recognise a 4Fe-4S domain in the interval 1 to 61 (MPKKISAMDI…FEKNKKKIIE (61 aa)). Residues Cys-19, Cys-22, Cys-27, and Cys-44 each coordinate [4Fe-4S] cluster.

As to quaternary structure, heterodimer of delta and gamma chains. The ACDS complex is made up of alpha, epsilon, beta, gamma and delta chains with a probable stoichiometry of (alpha(2)epsilon(2))(4)-beta(8)-(gamma(1)delta(1))(8). The cofactor is corrinoid. Requires [4Fe-4S] cluster as cofactor.

It carries out the reaction 5,6,7,8-tetrahydrosarcinapterin + methyl-Co(III)-[corrinoid Fe-S protein] = 5-methyltetrahydrosarcinapterin + Co(I)-[corrinoid Fe-S protein] + H(+). Its function is as follows. Part of a complex that catalyzes the reversible cleavage of acetyl-CoA, allowing autotrophic growth from CO(2). This chain is Acetyl-CoA decarbonylase/synthase complex subunit gamma, found in Methanocaldococcus jannaschii (strain ATCC 43067 / DSM 2661 / JAL-1 / JCM 10045 / NBRC 100440) (Methanococcus jannaschii).